Reading from the N-terminus, the 329-residue chain is 4-hydroxythreonine-4-phosphate dehydrogenase (329 aa).

2 residues coordinate substrate: His136 and Thr137. A divalent metal cation is bound by residues His166, His211, and His266. Positions 274, 283, and 292 each coordinate substrate.

Belongs to the PdxA family. In terms of assembly, homodimer. The cofactor is Zn(2+). Requires Mg(2+) as cofactor. Co(2+) serves as cofactor.

Its subcellular location is the cytoplasm. The catalysed reaction is 4-(phosphooxy)-L-threonine + NAD(+) = 3-amino-2-oxopropyl phosphate + CO2 + NADH. Its pathway is cofactor biosynthesis; pyridoxine 5'-phosphate biosynthesis; pyridoxine 5'-phosphate from D-erythrose 4-phosphate: step 4/5. Its function is as follows. Catalyzes the NAD(P)-dependent oxidation of 4-(phosphooxy)-L-threonine (HTP) into 2-amino-3-oxo-4-(phosphooxy)butyric acid which spontaneously decarboxylates to form 3-amino-2-oxopropyl phosphate (AHAP). The polypeptide is 4-hydroxythreonine-4-phosphate dehydrogenase (Shigella dysenteriae serotype 1 (strain Sd197)).